Reading from the N-terminus, the 250-residue chain is 5'-nucleotidase SurE (250 aa).

4 residues coordinate a divalent metal cation: Asp-8, Asp-9, Ser-39, and Asn-91.

The protein belongs to the SurE nucleotidase family. A divalent metal cation serves as cofactor.

Its subcellular location is the cytoplasm. It catalyses the reaction a ribonucleoside 5'-phosphate + H2O = a ribonucleoside + phosphate. In terms of biological role, nucleotidase that shows phosphatase activity on nucleoside 5'-monophosphates. This is 5'-nucleotidase SurE from Shewanella halifaxensis (strain HAW-EB4).